Reading from the N-terminus, the 187-residue chain is Casparian strip membrane protein 1 (187 aa).

Residues 1–10 (MKGSSEHGET) show a composition bias toward basic and acidic residues. Positions 1–20 (MKGSSEHGETSKQAPLGSSR) are disordered. The Cytoplasmic portion of the chain corresponds to 1–27 (MKGSSEHGETSKQAPLGSSRGVSKGVS). Residues 28 to 48 (VLDLILRFIAIIGTLASAIAM) form a helical membrane-spanning segment. Residues 49-75 (GTTNETLPFFTQFIRFKAQYSDLPTLT) are Extracellular-facing. Asparagine 52 is a glycosylation site (N-linked (GlcNAc...) asparagine). Residues 76–96 (FFVVANSIVCAYLTLSLPLSI) form a helical membrane-spanning segment. The Cytoplasmic segment spans residues 97 to 115 (VHIIRSRAKYSRLLLVVLD). The chain crosses the membrane as a helical span at residues 116-136 (AAMLALVTPGASAAAAIVYLA). The Extracellular segment spans residues 137 to 162 (HKGNVRANWLAICQQFDSFCERISGC). The chain crosses the membrane as a helical span at residues 163 to 183 (LIGSFGAMVMLVLLLLLSAIA). Over 184-187 (LARR) the chain is Cytoplasmic.

It belongs to the Casparian strip membrane proteins (CASP) family. Homodimer and heterodimers.

The protein resides in the cell membrane. Regulates membrane-cell wall junctions and localized cell wall deposition. Required for establishment of the Casparian strip membrane domain (CSD) and the subsequent formation of Casparian strips, a cell wall modification of the root endodermis that determines an apoplastic barrier between the intraorganismal apoplasm and the extraorganismal apoplasm and prevents lateral diffusion. This is Casparian strip membrane protein 1 from Zea mays (Maize).